Consider the following 87-residue polypeptide: Small ribosomal subunit protein bS20 (87 aa).

Belongs to the bacterial ribosomal protein bS20 family.

Its function is as follows. Binds directly to 16S ribosomal RNA. This chain is Small ribosomal subunit protein bS20, found in Sphingopyxis alaskensis (strain DSM 13593 / LMG 18877 / RB2256) (Sphingomonas alaskensis).